We begin with the raw amino-acid sequence, 474 residues long: MDLTINEKRVLAALIGSGPKAAEILAEKMDAALESVIQWAHLCADKGLVTLEKTVTEQAKLTEEGEKYAKEGLPERQILNSIDGSIPMSELTKNPLSKIAIGWLRKKNWVTIKDGIVFVNENTAVGEDELALKNPVPGTPACKELAKRGLVEVVEKTSWKIALTTDGEKIAKDGLDLREEVATLTREQILSGEWKSLPLRKYSIDKLPKKIYGGRVHPNQQILDEIRDLLFEMGFTEFHGSIVQNSFWNFDSLYQPQDHPAREMQDTFHLAEELPLPNGWEKIRDIHKFGGDTGSTGWGGEWSPEVGKKCVLRTHSTSLSIQYLAEHPNPPLKAFSISRVYRRETIDPTHLPEFEQLEGIVMDKDLHFGHLLGFFKEFFGRMGFEEVRFRPGYFPYTEPSVEPEVWVDGLGWVELGGAGIFRKEVTAPWGIDCPVLAWGLGVSRVSMLRMGLKDLRQLYKSDIDWIRASPVRRS.

Residues Thr317, 356–358, and Tyr396 contribute to the L-phenylalanine site; that span reads QLE. Glu398 provides a ligand contact to Mg(2+). L-phenylalanine is bound at residue Phe421.

This sequence belongs to the class-II aminoacyl-tRNA synthetase family. Phe-tRNA synthetase alpha subunit type 2 subfamily. Tetramer of two alpha and two beta subunits. The cofactor is Mg(2+).

Its subcellular location is the cytoplasm. It catalyses the reaction tRNA(Phe) + L-phenylalanine + ATP = L-phenylalanyl-tRNA(Phe) + AMP + diphosphate + H(+). The polypeptide is Phenylalanine--tRNA ligase alpha subunit (Methanocorpusculum labreanum (strain ATCC 43576 / DSM 4855 / Z)).